A 691-amino-acid chain; its full sequence is DNA ligase (691 aa).

Residues 41-45, 90-91, and Glu-130 each bind NAD(+); these read DAEYD and SL. Lys-132 functions as the N6-AMP-lysine intermediate in the catalytic mechanism. NAD(+)-binding residues include Arg-153, Glu-190, Lys-307, and Lys-331. Positions 425, 428, 443, and 449 each coordinate Zn(2+). The BRCT domain occupies 610–691; the sequence is APQGVLAGKT…MHTLLEGHAR (82 aa).

Belongs to the NAD-dependent DNA ligase family. LigA subfamily. Requires Mg(2+) as cofactor. It depends on Mn(2+) as a cofactor.

It carries out the reaction NAD(+) + (deoxyribonucleotide)n-3'-hydroxyl + 5'-phospho-(deoxyribonucleotide)m = (deoxyribonucleotide)n+m + AMP + beta-nicotinamide D-nucleotide.. DNA ligase that catalyzes the formation of phosphodiester linkages between 5'-phosphoryl and 3'-hydroxyl groups in double-stranded DNA using NAD as a coenzyme and as the energy source for the reaction. It is essential for DNA replication and repair of damaged DNA. The polypeptide is DNA ligase (Burkholderia pseudomallei (strain 1106a)).